Reading from the N-terminus, the 159-residue chain is SsrA-binding protein (159 aa).

It belongs to the SmpB family.

The protein resides in the cytoplasm. In terms of biological role, required for rescue of stalled ribosomes mediated by trans-translation. Binds to transfer-messenger RNA (tmRNA), required for stable association of tmRNA with ribosomes. tmRNA and SmpB together mimic tRNA shape, replacing the anticodon stem-loop with SmpB. tmRNA is encoded by the ssrA gene; the 2 termini fold to resemble tRNA(Ala) and it encodes a 'tag peptide', a short internal open reading frame. During trans-translation Ala-aminoacylated tmRNA acts like a tRNA, entering the A-site of stalled ribosomes, displacing the stalled mRNA. The ribosome then switches to translate the ORF on the tmRNA; the nascent peptide is terminated with the 'tag peptide' encoded by the tmRNA and targeted for degradation. The ribosome is freed to recommence translation, which seems to be the essential function of trans-translation. In Idiomarina loihiensis (strain ATCC BAA-735 / DSM 15497 / L2-TR), this protein is SsrA-binding protein.